The sequence spans 144 residues: Large ribosomal subunit protein uL16 (144 aa).

The segment covering 1 to 14 (MLMPKRVKYRKPHR) has biased composition (basic residues). The tract at residues 1–25 (MLMPKRVKYRKPHRPGTQGKATRGN) is disordered.

This sequence belongs to the universal ribosomal protein uL16 family. In terms of assembly, part of the 50S ribosomal subunit.

Binds 23S rRNA and is also seen to make contacts with the A and possibly P site tRNAs. The protein is Large ribosomal subunit protein uL16 of Moorella thermoacetica (strain ATCC 39073 / JCM 9320).